Reading from the N-terminus, the 152-residue chain is Isoquinoline 1-oxidoreductase subunit alpha (152 aa).

Positions 1 to 77 (MIEFILNGQP…RQSVTTIEGL (77 aa)) constitute a 2Fe-2S ferredoxin-type domain. 3 residues coordinate [2Fe-2S] cluster: Cys39, Cys44, and Cys47.

As to quaternary structure, heterodimer of an alpha chain and a beta chain.

It carries out the reaction isoquinoline + A + H2O = isoquinolin-1(2H)-one + AH2. Specific towards N-containing N-heterocyclic substrates, including isoquinoline, isoquinolin-5-ol, phthalazine and quinazoline. The polypeptide is Isoquinoline 1-oxidoreductase subunit alpha (iorA) (Brevundimonas diminuta (Pseudomonas diminuta)).